The primary structure comprises 460 residues: Methylenetetrahydrofolate--tRNA-(uracil-5-)-methyltransferase TrmFO (460 aa).

15–20 (GAGLAG) lines the FAD pocket.

This sequence belongs to the MnmG family. TrmFO subfamily. FAD serves as cofactor.

Its subcellular location is the cytoplasm. It carries out the reaction uridine(54) in tRNA + (6R)-5,10-methylene-5,6,7,8-tetrahydrofolate + NADH + H(+) = 5-methyluridine(54) in tRNA + (6S)-5,6,7,8-tetrahydrofolate + NAD(+). The enzyme catalyses uridine(54) in tRNA + (6R)-5,10-methylene-5,6,7,8-tetrahydrofolate + NADPH + H(+) = 5-methyluridine(54) in tRNA + (6S)-5,6,7,8-tetrahydrofolate + NADP(+). In terms of biological role, catalyzes the folate-dependent formation of 5-methyl-uridine at position 54 (M-5-U54) in all tRNAs. This is Methylenetetrahydrofolate--tRNA-(uracil-5-)-methyltransferase TrmFO from Synechococcus sp. (strain CC9902).